A 609-amino-acid chain; its full sequence is Rhotekin-2 (609 aa).

Residues 5-81 form the REM-1 domain; the sequence is SLRGPALRLA…LQKLEEQIAN (77 aa). A coiled-coil region spans residues 56–91; the sequence is KNLMVCNARLMAYTSELQKLEEQIANQTGRCDVKFE. The 108-residue stretch at 286 to 393 folds into the PH domain; it reads EDAFAGFLNQ…WMEAFWQHFF (108 aa). 2 disordered regions span residues 495–520 and 554–609; these read HDEK…KSQS and KPMA…QAQV. The span at 569 to 582 shows a compositional bias: basic and acidic residues; it reads RLSDGEHTDTKTNF.

Expressed in lymphocytes, CD4 positive T-cells and bone marrow-derived cells. Also expressed in lung, colon, thymus and brain.

May play an important role in lymphopoiesis. The sequence is that of Rhotekin-2 (RTKN2) from Homo sapiens (Human).